Here is a 556-residue protein sequence, read N- to C-terminus: 2-isopropylmalate synthase (556 aa).

One can recognise a Pyruvate carboxyltransferase domain in the interval 33–307; it reads PIWCSSDLRD…NPELDFSDID (275 aa). The Mg(2+) site is built by Asp-42, His-246, His-248, and Asn-282. The tract at residues 439–556 is regulatory domain; it reads ANTPYALISH…SLSQAQAKAA (118 aa).

Belongs to the alpha-IPM synthase/homocitrate synthase family. LeuA type 2 subfamily. In terms of assembly, homodimer. Mg(2+) is required as a cofactor.

It is found in the cytoplasm. The catalysed reaction is 3-methyl-2-oxobutanoate + acetyl-CoA + H2O = (2S)-2-isopropylmalate + CoA + H(+). It participates in amino-acid biosynthesis; L-leucine biosynthesis; L-leucine from 3-methyl-2-oxobutanoate: step 1/4. Functionally, catalyzes the condensation of the acetyl group of acetyl-CoA with 3-methyl-2-oxobutanoate (2-ketoisovalerate) to form 3-carboxy-3-hydroxy-4-methylpentanoate (2-isopropylmalate). The polypeptide is 2-isopropylmalate synthase (Pseudomonas syringae pv. tomato (strain ATCC BAA-871 / DC3000)).